We begin with the raw amino-acid sequence, 140 residues long: Large ribosomal subunit protein uL14 (140 aa).

It belongs to the universal ribosomal protein uL14 family. In terms of assembly, part of the 50S ribosomal subunit. Forms a cluster with proteins L3 and L24e, part of which may contact the 16S rRNA in 2 intersubunit bridges.

Binds to 23S rRNA. Forms part of two intersubunit bridges in the 70S ribosome. This Staphylothermus marinus (strain ATCC 43588 / DSM 3639 / JCM 9404 / F1) protein is Large ribosomal subunit protein uL14.